The following is a 385-amino-acid chain: MRLDQRWLIARVIMRSAIGFFASFTVSSGVLAANVLADPADDALAKLNELSRQAEQTTEALHSAQLDLNEKLAAQRAADQKLADNRTALDAARARLATFQTAVNKVAAATYMGGRTHGMDAILTAESPQLLIDRLSVQRVMAHQMSTQMARFKAAGEQAVKAEQAAAKSAADARSAAEQAAAVRANLQHKQSQLQVQIAVVKSQYVALTPEERTALADPGPVPAVAAIAPGAPPAALPPGAPPGDGPAPGVAPPPGGMPGLPFVQPDGAGGDRTAVVQAALTQVGAPYAWGGAAPGGFDCSGLVMWAFQQAGIALPHSSQALAHGGQPVALSDLQPGDVLTFYSDASHAGIYIGDGLMVHSSTYGVPVRVVPMDSSGPIYDARRY.

Positions 235–257 (AALPPGAPPGDGPAPGVAPPPGG) are enriched in pro residues. The segment at 235 to 268 (AALPPGAPPGDGPAPGVAPPPGGMPGLPFVQPDG) is disordered. The NlpC/P60 domain maps to 270–385 (GGDRTAVVQA…SGPIYDARRY (116 aa)). Residue Cys-300 is the Nucleophile of the active site. Catalysis depends on His-348, which acts as the Proton acceptor. Residue His-360 is part of the active site.

This sequence belongs to the peptidase C40 family.

This Mycobacterium tuberculosis (strain CDC 1551 / Oshkosh) protein is Probable endopeptidase MT2245.